A 56-amino-acid chain; its full sequence is Small ribosomal subunit protein uS14 (56 aa).

Zn(2+)-binding residues include cysteine 21, cysteine 24, cysteine 39, and cysteine 42.

The protein belongs to the universal ribosomal protein uS14 family. In terms of assembly, component of the 40S small ribosomal subunit. The cofactor is Zn(2+).

It is found in the cytoplasm. It localises to the cytosol. The protein resides in the rough endoplasmic reticulum. This is Small ribosomal subunit protein uS14 (RpS29) from Lonomia obliqua (Moth).